Reading from the N-terminus, the 515-residue chain is 2-isopropylmalate synthase (515 aa).

Positions 5–267 (VIIFDTTLRD…HTSLKNDEIH (263 aa)) constitute a Pyruvate carboxyltransferase domain. Mn(2+)-binding residues include D14, H202, H204, and N238. A regulatory domain region spans residues 392–515 (KLNYLSVQSG…EIKQNKITTV (124 aa)).

It belongs to the alpha-IPM synthase/homocitrate synthase family. LeuA type 1 subfamily. Homodimer. The cofactor is Mn(2+).

It localises to the cytoplasm. It carries out the reaction 3-methyl-2-oxobutanoate + acetyl-CoA + H2O = (2S)-2-isopropylmalate + CoA + H(+). The protein operates within amino-acid biosynthesis; L-leucine biosynthesis; L-leucine from 3-methyl-2-oxobutanoate: step 1/4. Its function is as follows. Catalyzes the condensation of the acetyl group of acetyl-CoA with 3-methyl-2-oxobutanoate (2-ketoisovalerate) to form 3-carboxy-3-hydroxy-4-methylpentanoate (2-isopropylmalate). This Aliivibrio salmonicida (strain LFI1238) (Vibrio salmonicida (strain LFI1238)) protein is 2-isopropylmalate synthase.